Consider the following 758-residue polypeptide: Actin filament-associated protein 1-like 1 (758 aa).

A disordered region spans residues 91–194; the sequence is YRDSSENLSC…YESYDEEDEE (104 aa). Residues 102-120 show a composition bias toward pro residues; sequence LPPPPSAPPPPLPTTPPPE. Over residues 137–148 the composition is skewed to polar residues; that stretch reads YITSRNSSSPPN. Residues 177–186 show a composition bias toward low complexity; sequence ESDGLSSSYE. In terms of domain architecture, PH 1 spans 216 to 312; sequence DSRICAFLLR…WLRVIKEVIS (97 aa). Positions 335 to 369 are disordered; the sequence is SHDKTSDSDSAANGENSSLSSGKENRDTGKCRKGG. Residues 342 to 356 are compositionally biased toward polar residues; the sequence is SDSAANGENSSLSSG. The region spanning 409–503 is the PH 2 domain; the sequence is EVPCCGYLSV…WLGLLLAQTG (95 aa). Residues 602–690 are a coiled coil; that stretch reads KTRAEEDARK…TEVKENLKKS (89 aa). A disordered region spans residues 692–758; it reads AGGPTLGLAV…KAKEWEKKKP (67 aa). Residues 749 to 758 are compositionally biased toward basic and acidic residues; sequence KAKEWEKKKP.

It localises to the cytoplasm. It is found in the cell projection. The protein resides in the podosome. The protein localises to the invadopodium. Its subcellular location is the cytoskeleton. It localises to the stress fiber. In terms of biological role, may be involved in podosome and invadosome formation. The sequence is that of Actin filament-associated protein 1-like 1 (afap1l1) from Xenopus tropicalis (Western clawed frog).